A 306-amino-acid chain; its full sequence is Pantothenate kinase (306 aa).

90–97 is an ATP binding site; it reads GSVAVGKS.

The protein belongs to the prokaryotic pantothenate kinase family.

It is found in the cytoplasm. It carries out the reaction (R)-pantothenate + ATP = (R)-4'-phosphopantothenate + ADP + H(+). Its pathway is cofactor biosynthesis; coenzyme A biosynthesis; CoA from (R)-pantothenate: step 1/5. This Listeria innocua serovar 6a (strain ATCC BAA-680 / CLIP 11262) protein is Pantothenate kinase (coaA).